Here is a 772-residue protein sequence, read N- to C-terminus: MKLTLVILALVACVTAFSVPTQKVKIADKNFLEKQKFLFEIVHRIDEPLMFEEWIKMGQKLITDKAQYETFDFYMEKLWESYKLGALLPKGEFFGALVKTHHKQAYGLFNFFYYAKDWETFVRNVAWARIHVNEGMFVYALTLAVIHKPEFEGLILPQIYEIFPQYFFNSKFVYAAEKFDYEVFSKLTMYEKEYKDILYKDYSEFTGNFYFYTKDWKTWQWYKMMGLDQEWYVEDKYFLRENLSQFVNDPKYVDVVKGLKKFYMPVDYTRDIDFFNDETKMTYFTEDLGWNAYWYYLNMDYAFFLNGKQFGLDKDRRGEYWIYNVQQILARYYQERLANGFGEIPEFFWYKQIEYGYDPQLIYYNGIGYSYRKNYYDFYTYGKFEMYSQIQNFFSRVYKVLETGFYKTADGQVFDLHKPEAIKIVGNYLQGNADTFDKYFFNYYYLLAHMYFADVDYNDMEVFPNVFLNFETMLRDPFFYTFYKKFTDVFYTFKYYLKPYTQKDLFYEGITIKDVSVSKLVTYYDIVDFDVTNLLNDKMTFVDGQYIWDKALLARQARLNHKPFNFEFTIDSDKVQKGVVRVFLGPKFDEYGRVIPLDYNRKNFVQIDSFVYPFIAGTNTIKRSSKEFSWTAEDRITYTELYKYVMLASEGKYDFPLDISEPHNAFPDRLVLPKGWEQGMPMQFYFFVSPFAETYEQFSNFDYTYSSGVGSGTRFVDTKPFGYPFDRQIDESDFFVPNGFFKDVKVYYVDTFAKYFEKKYTQFGTFDYSIEY.

A signal peptide spans 1-16 (MKLTLVILALVACVTA). Residue N242 is glycosylated (N-linked (GlcNAc...) asparagine).

This sequence belongs to the hemocyanin family. In terms of assembly, heterohexamer, composed of three subunits, alpha, beta and gamma. As to expression, larval hemolymph.

The protein resides in the secreted. It localises to the extracellular space. Functionally, larval storage protein (LSP) which may serve as a store of amino acids for synthesis of adult proteins. In Drosophila melanogaster (Fruit fly), this protein is Larval serum protein 1 gamma chain (Lsp1gamma).